Reading from the N-terminus, the 364-residue chain is Medium-wave-sensitive opsin 1 (364 aa).

The Extracellular portion of the chain corresponds to 1-52 (MAQRWGPHALSGVQAQDAYEDSTQASLFTYTNSNNTRGPFEGPNYHIAPRWV). A required for 11-cis-retinal regeneration region spans residues 17–43 (DAYEDSTQASLFTYTNSNNTRGPFEGP). N34 carries an N-linked (GlcNAc...) asparagine glycan. The chain crosses the membrane as a helical span at residues 53–77 (YHLTSAWMTIVVIASIFTNGLVLVA). Residues 78 to 89 (TMRFKKLRHPLN) are Cytoplasmic-facing. Residues 90-115 (WILVNLAVADLAETVIASTISVVNQV) traverse the membrane as a helical segment. Residues 116-129 (YGYFVLGHPLCVVE) lie on the Extracellular side of the membrane. Residues C126 and C203 are joined by a disulfide bond. The chain crosses the membrane as a helical span at residues 130–149 (GYTVSLCGITGLWSLAIISW). Topologically, residues 150 to 168 (ERWLVVCKPFGNVRFDAKL) are cytoplasmic. Residues 169-192 (AIVGIVFSWVWSAVWTAPPIFGWS) form a helical membrane-spanning segment. Topologically, residues 193–218 (RYWPYGLKTSCGPDVFSGTSYPGVQS) are extracellular. A helical membrane pass occupies residues 219–246 (YMMVLMVTCCITPLSIIVLCYLHVWLAI). Residues 247–268 (RAVAKQQKESESTQKAEKEVTR) lie on the Cytoplasmic side of the membrane. Residues 269–292 (MVVVMVLAYCLCWGPYAFFACFAT) form a helical membrane-spanning segment. Topologically, residues 293–300 (ANPGYSFH) are extracellular. The helical transmembrane segment at 301-325 (PLVAALPAYFAKSATIYNPIIYVFM) threads the bilayer. Residue K312 is modified to N6-(retinylidene)lysine. At 326–364 (NRQFRNCILQLFGKKVEDSSELSSTSRTEASSVSSVSPA) the chain is on the cytoplasmic side.

This sequence belongs to the G-protein coupled receptor 1 family. Opsin subfamily. As to quaternary structure, monomer. Homodimer. Homotetramer. Post-translationally, O-glycosylated. In terms of processing, phosphorylated on some or all of the serine and threonine residues present in the C-terminal region. Expressed in cone photoreceptor cells.

Its subcellular location is the membrane. Its function is as follows. Visual pigments are the light-absorbing molecules that mediate vision. They consist of an apoprotein, opsin, covalently linked to cis-retinal. May increase spectral sensitivity in dim light. The protein is Medium-wave-sensitive opsin 1 (OPN1MW) of Cavia porcellus (Guinea pig).